Consider the following 84-residue polypeptide: uncharacterized protein (84 aa).

The chain crosses the membrane as a helical span at residues 13–35 (TTLVLTIISTTTTTLFAIIQLYL). Residues 41–84 (LKDAVKEIVNSELSNLKTEIEELKIKQDELSRQVEEIKRKLDQK) adopt a coiled-coil conformation.

It is found in the host membrane. This is an uncharacterized protein from Sulfolobus islandicus rod-shaped virus 1 (SIRV-1).